A 347-amino-acid chain; its full sequence is Very-long-chain 3-oxoacyl-CoA reductase (347 aa).

A helical membrane pass occupies residues 20–40 (LLWVVFGLGVLKCTTLSLRFL). 7 residues coordinate NADP(+): Val66, Asp120, Asn147, Tyr223, Lys227, Val256, and Ser258. Residue Tyr223 is the Proton donor of the active site. Catalysis depends on Lys227, which acts as the Lowers pKa of active site Tyr.

It belongs to the short-chain dehydrogenases/reductases (SDR) family. In terms of assembly, interacts with the fatty acid elongation system components ELO3 and TSC13.

It localises to the endoplasmic reticulum membrane. It catalyses the reaction a very-long-chain (3R)-3-hydroxyacyl-CoA + NADP(+) = a very-long-chain 3-oxoacyl-CoA + NADPH + H(+). Its pathway is lipid metabolism; fatty acid biosynthesis. In terms of biological role, component of the microsomal membrane bound fatty acid elongation system, which produces the 26-carbon very long-chain fatty acids (VLCFA) from palmitate. Catalyzes the reduction of the 3-ketoacyl-CoA intermediate that is formed in each cycle of fatty acid elongation. VLCFAs serve as precursors for ceramide and sphingolipids. This is Very-long-chain 3-oxoacyl-CoA reductase from Saccharomyces cerevisiae (strain RM11-1a) (Baker's yeast).